The primary structure comprises 646 residues: RNase E specificity factor CsrD (646 aa).

The next 2 helical transmembrane spans lie at 10–30 (FVTL…SLSF) and 135–155 (MTTA…FLAV). The tract at residues 152–219 (FLAVRWLQRQ…REQHSRLDTL (68 aa)) is HAMP-like. Positions 194 to 224 (RTSSALDTLLREIQNAREQHSRLDTLIRSYA) form a coiled coil. A GGDEF domain is found at 254 to 387 (THGIVMMIRL…GGNSWAIYDD (134 aa)). The region spanning 396–644 (NVRWRTLIEQ…TNVKKYSQRY (249 aa)) is the EAL domain.

It localises to the cell membrane. Functionally, serves as a specificity factor required for RNase E-mediated decay of the small global regulatory RNAs CsrB and CsrC, it is probably not a nuclease. Nor does its activity involve c-di-GMP, despite its domain composition. Positively modulates motility gene expression, is also required for curli expression. This is RNase E specificity factor CsrD (csrD) from Escherichia coli (strain K12).